The chain runs to 351 residues: GDSL esterase/lipase At3g14820 (351 aa).

Positions 1–22 (MDLHLIGFLLWFFVVQVTTSSA) are cleaved as a signal peptide. The N-linked (GlcNAc...) asparagine glycan is linked to Asn25. The active-site Nucleophile is the Ser39. Active-site residues include Asp325 and His328.

Belongs to the 'GDSL' lipolytic enzyme family.

The protein resides in the secreted. The sequence is that of GDSL esterase/lipase At3g14820 from Arabidopsis thaliana (Mouse-ear cress).